The chain runs to 98 residues: NADH-ubiquinone oxidoreductase chain 4L (98 aa).

3 helical membrane-spanning segments follow: residues Met1–Ile21, Ile29–Ile49, and Leu61–Leu81.

Belongs to the complex I subunit 4L family.

It is found in the mitochondrion membrane. The enzyme catalyses a ubiquinone + NADH + 5 H(+)(in) = a ubiquinol + NAD(+) + 4 H(+)(out). In terms of biological role, core subunit of the mitochondrial membrane respiratory chain NADH dehydrogenase (Complex I) that is believed to belong to the minimal assembly required for catalysis. Complex I functions in the transfer of electrons from NADH to the respiratory chain. The immediate electron acceptor for the enzyme is believed to be ubiquinone. This Patiria pectinifera (Starfish) protein is NADH-ubiquinone oxidoreductase chain 4L (ND4L).